The chain runs to 78 residues: Acyl carrier protein (78 aa).

Residues 2 to 77 (SDIEQRVKKI…QAIDYVNANL (76 aa)) form the Carrier domain. Ser-37 is modified (O-(pantetheine 4'-phosphoryl)serine).

The protein belongs to the acyl carrier protein (ACP) family. Post-translationally, 4'-phosphopantetheine is transferred from CoA to a specific serine of apo-ACP by AcpS. This modification is essential for activity because fatty acids are bound in thioester linkage to the sulfhydryl of the prosthetic group.

The protein resides in the cytoplasm. The protein operates within lipid metabolism; fatty acid biosynthesis. In terms of biological role, carrier of the growing fatty acid chain in fatty acid biosynthesis. The protein is Acyl carrier protein of Methylobacillus flagellatus (strain ATCC 51484 / DSM 6875 / VKM B-1610 / KT).